We begin with the raw amino-acid sequence, 103 residues long: Small ribosomal subunit protein uS10 (103 aa).

The protein belongs to the universal ribosomal protein uS10 family. In terms of assembly, part of the 30S ribosomal subunit.

Its function is as follows. Involved in the binding of tRNA to the ribosomes. The sequence is that of Small ribosomal subunit protein uS10 from Azoarcus sp. (strain BH72).